The primary structure comprises 130 residues: Riboflavin kinase (130 aa).

12-17 (GLGVGA) is a binding site for CDP. Residues threonine 39 and asparagine 41 each contribute to the Mg(2+) site. FMN is bound by residues threonine 90 and glutamate 98. Position 103 to 106 (103 to 106 (KNLR)) interacts with CDP.

Belongs to the archaeal riboflavin kinase family. It depends on Mg(2+) as a cofactor.

The catalysed reaction is riboflavin + CTP = CDP + FMN + H(+). The protein operates within cofactor biosynthesis; FMN biosynthesis; FMN from riboflavin (CTP route): step 1/1. Functionally, catalyzes the CTP-dependent phosphorylation of riboflavin (vitamin B2) to form flavin mononucleotide (FMN). This chain is Riboflavin kinase, found in Staphylothermus marinus (strain ATCC 43588 / DSM 3639 / JCM 9404 / F1).